The sequence spans 343 residues: Anthranilate phosphoribosyltransferase (343 aa).

5-phospho-alpha-D-ribose 1-diphosphate is bound by residues G81, 84–85, 91–94, 109–117, and S121; these read GD, NLST, and KHGNRSVSS. Residue G81 coordinates anthranilate. S93 is a binding site for Mg(2+). N112 serves as a coordination point for anthranilate. Residue R167 coordinates anthranilate. Residues D226 and E227 each coordinate Mg(2+).

The protein belongs to the anthranilate phosphoribosyltransferase family. In terms of assembly, homodimer. It depends on Mg(2+) as a cofactor.

The enzyme catalyses N-(5-phospho-beta-D-ribosyl)anthranilate + diphosphate = 5-phospho-alpha-D-ribose 1-diphosphate + anthranilate. Its pathway is amino-acid biosynthesis; L-tryptophan biosynthesis; L-tryptophan from chorismate: step 2/5. Catalyzes the transfer of the phosphoribosyl group of 5-phosphorylribose-1-pyrophosphate (PRPP) to anthranilate to yield N-(5'-phosphoribosyl)-anthranilate (PRA). The sequence is that of Anthranilate phosphoribosyltransferase from Cellvibrio japonicus (strain Ueda107) (Pseudomonas fluorescens subsp. cellulosa).